The chain runs to 309 residues: MTIITEKIAVLLGGTSQERNISLISGYNILNSLLKSGIHAVAIDTKDFPITQLPHQKFTKAFIALHGRDGEDGTIQSVLKYLNIPFTGSKTLPSAISINKFKTKLLWQSFNLPVVPYLHINKHEFNKKFLQKFKKNISLLGLPIIVKPNQEGSSIGITIVYSYETLYKACKTAFIFDNSILIEKFIYGEEYTISILGKKILPIIRICPENTFYNYNSKYLSNRTTYFCPSGLNKLKELELKKITLTAWNIIDGTGWGRVDVIMDYKNKFWLLEANTCPGMTDHSLFPMSAKKAGISYQILVQKILELAN.

An ATP-grasp domain is found at 104–306 (KLLWQSFNLP…YQILVQKILE (203 aa)). 137 to 192 (ISLLGLPIIVKPNQEGSSIGITIVYSYETLYKACKTAFIFDNSILIEKFIYGEEYT) provides a ligand contact to ATP. The Mg(2+) site is built by Asp-260, Glu-273, and Asn-275.

This sequence belongs to the D-alanine--D-alanine ligase family. Mg(2+) serves as cofactor. Requires Mn(2+) as cofactor.

It localises to the cytoplasm. It catalyses the reaction 2 D-alanine + ATP = D-alanyl-D-alanine + ADP + phosphate + H(+). It functions in the pathway cell wall biogenesis; peptidoglycan biosynthesis. Its function is as follows. Cell wall formation. This is D-alanine--D-alanine ligase from Buchnera aphidicola subsp. Baizongia pistaciae (strain Bp).